The primary structure comprises 264 residues: 3-methyl-2-oxobutanoate hydroxymethyltransferase (264 aa).

Positions 45 and 84 each coordinate Mg(2+). Residues 45–46 (DS), Asp-84, and Lys-112 each bind 3-methyl-2-oxobutanoate. Glu-114 serves as a coordination point for Mg(2+). Glu-181 (proton acceptor) is an active-site residue.

Belongs to the PanB family. As to quaternary structure, homodecamer; pentamer of dimers. Mg(2+) serves as cofactor.

It localises to the cytoplasm. The enzyme catalyses 3-methyl-2-oxobutanoate + (6R)-5,10-methylene-5,6,7,8-tetrahydrofolate + H2O = 2-dehydropantoate + (6S)-5,6,7,8-tetrahydrofolate. It functions in the pathway cofactor biosynthesis; (R)-pantothenate biosynthesis; (R)-pantoate from 3-methyl-2-oxobutanoate: step 1/2. Catalyzes the reversible reaction in which hydroxymethyl group from 5,10-methylenetetrahydrofolate is transferred onto alpha-ketoisovalerate to form ketopantoate. This chain is 3-methyl-2-oxobutanoate hydroxymethyltransferase, found in Escherichia coli O1:K1 / APEC.